We begin with the raw amino-acid sequence, 191 residues long: Cdc42 homolog (191 aa).

10 to 17 (GDGAVGKT) provides a ligand contact to GTP. Positions 32-40 (YVPTVFDNY) match the Effector region motif. GTP is bound by residues 57–61 (DTAGQ) and 115–118 (TQID). Cysteine 188 carries the cysteine methyl ester modification. Cysteine 188 carries S-geranylgeranyl cysteine lipidation. Residues 189–191 (KFL) constitute a propeptide, removed in mature form.

Belongs to the small GTPase superfamily. Rho family. CDC42 subfamily.

It is found in the cell junction. Its subcellular location is the adherens junction. The protein localises to the cell membrane. The catalysed reaction is GTP + H2O = GDP + phosphate + H(+). Functionally, regulates mbt kinase activity and is also required to recruit mbt to adherens junctions. Together with mbt, regulates photoreceptor cell morphogenesis. The chain is Cdc42 homolog from Drosophila pseudoobscura pseudoobscura (Fruit fly).